The primary structure comprises 413 residues: 1-deoxy-D-xylulose 5-phosphate reductoisomerase (413 aa).

Residues Thr-28, Gly-29, Ser-30, Ile-31, Gly-54, Arg-55, Asn-56, and Asn-142 each coordinate NADPH. A 1-deoxy-D-xylulose 5-phosphate-binding site is contributed by Lys-143. Glu-144 is an NADPH binding site. Asp-168 contributes to the Mn(2+) binding site. Positions 169, 170, 194, and 217 each coordinate 1-deoxy-D-xylulose 5-phosphate. Residue Glu-170 coordinates Mn(2+). Gly-223 provides a ligand contact to NADPH. Residues Ser-230, Asn-235, Lys-236, and Glu-239 each contribute to the 1-deoxy-D-xylulose 5-phosphate site. Residue Glu-239 coordinates Mn(2+).

Belongs to the DXR family. It depends on Mg(2+) as a cofactor. Requires Mn(2+) as cofactor.

The catalysed reaction is 2-C-methyl-D-erythritol 4-phosphate + NADP(+) = 1-deoxy-D-xylulose 5-phosphate + NADPH + H(+). Its pathway is isoprenoid biosynthesis; isopentenyl diphosphate biosynthesis via DXP pathway; isopentenyl diphosphate from 1-deoxy-D-xylulose 5-phosphate: step 1/6. Its function is as follows. Catalyzes the NADPH-dependent rearrangement and reduction of 1-deoxy-D-xylulose-5-phosphate (DXP) to 2-C-methyl-D-erythritol 4-phosphate (MEP). This is 1-deoxy-D-xylulose 5-phosphate reductoisomerase from Thermosynechococcus vestitus (strain NIES-2133 / IAM M-273 / BP-1).